The primary structure comprises 380 residues: Nucleoporin Nup43 (380 aa).

Methionine 1 carries the post-translational modification N-acetylmethionine. WD repeat units follow at residues 8-57 (FVSQ…NLDS), 72-110 (RHHGDVMDLQFFDQERIVAASSTGCVTVFLHHPNNQTLS), 127-166 (PSYSSAPCTGVVCNNPEIVTVGEDGRINLFRADHKEAVRT), 170-208 (ADSSTLHAVTFLRTPEILTVNSIGQLKIWDFRQQGNEPS), 215-255 (GDRV…MPVS), and 259-299 (AHEA…PEKS).

As to quaternary structure, component of the Nup107-160 subcomplex of the nuclear pore complex (NPC). The Nup107-160 subcomplex includes NUP160, NUP133, NUP107, NUP98, NUP85, NUP43, NUP37, SEH1 and SEC13.

The protein localises to the chromosome. It is found in the centromere. The protein resides in the kinetochore. It localises to the nucleus. Its subcellular location is the nuclear pore complex. In terms of biological role, component of the Nup107-160 subcomplex of the nuclear pore complex (NPC). The Nup107-160 subcomplex is required for the assembly of a functional NPC. The Nup107-160 subcomplex is also required for normal kinetochore microtubule attachment, mitotic progression and chromosome segregation. This Homo sapiens (Human) protein is Nucleoporin Nup43 (NUP43).